Here is an 852-residue protein sequence, read N- to C-terminus: Bifunctional heparan sulfate N-deacetylase/N-sulfotransferase 1 (852 aa).

Over Met1–Arg13 the chain is Cytoplasmic. Residues Pro14–Asn34 form a helical; Signal-anchor for type II membrane protein membrane-spanning segment. Residues Asn34–Ser574 form a heparan sulfate N-deacetylase 1 region. Residues Asn35–Ala852 lie on the Lumenal side of the membrane. N-linked (GlcNAc...) asparagine glycans are attached at residues Asn50, Asn72, Asn261, Asn328, Asn377, Asn428, and Asn576. Positions Ile575–Ala852 are heparan sulfate N-sulfotransferase 1. Lys592 (for sulfotransferase activity) is an active-site residue. Lys592–Thr596 provides a ligand contact to 3'-phosphoadenylyl sulfate. Asn607 carries an N-linked (GlcNAc...) asparagine glycan. Ser686 lines the 3'-phosphoadenylyl sulfate pocket. Asn712 carries an N-linked (GlcNAc...) asparagine glycan. A disulfide bridge links Cys789 with Cys798. Lys803–Tyr807 is a binding site for 3'-phosphoadenylyl sulfate.

It belongs to the sulfotransferase 1 family. NDST subfamily. Monomer. As to expression, present in some specific neurons in head and tail regions and muscles.

It localises to the golgi apparatus membrane. The catalysed reaction is alpha-D-glucosaminyl-[heparan sulfate](n) + 3'-phosphoadenylyl sulfate = N-sulfo-alpha-D-glucosaminyl-[heparan sulfate](n) + adenosine 3',5'-bisphosphate + 2 H(+). Its pathway is glycan metabolism; heparan sulfate biosynthesis. It functions in the pathway glycan metabolism; heparin biosynthesis. Functionally, essential bifunctional enzyme that catalyzes both the N-deacetylation and the N-sulfation of glucosamine (GlcNAc) of the glycosaminoglycan in heparan sulfate. Modifies the GlcNAc-GlcA disaccharide repeating sugar backbone to make N-sulfated heparosan, a prerequisite substrate for later modifications in heparin biosynthesis. This is Bifunctional heparan sulfate N-deacetylase/N-sulfotransferase 1 (hst-1) from Caenorhabditis elegans.